A 150-amino-acid chain; its full sequence is uncharacterized protein (150 aa).

In terms of domain architecture, HTH marR-type spans 1–133 (MNDILREIGM…ISALLHRVRK (133 aa)). The segment at residues 47–70 (QEKLAEMIKVDRTTAARAIKKLEM) is a DNA-binding region (H-T-H motif).

This is an uncharacterized protein from Bacillus subtilis (strain 168).